The sequence spans 456 residues: tRNA-2-methylthio-N(6)-dimethylallyladenosine synthase (456 aa).

Positions Lys-17–Glu-135 constitute an MTTase N-terminal domain. Residues Cys-26, Cys-62, Cys-96, Cys-172, Cys-176, and Cys-179 each contribute to the [4Fe-4S] cluster site. Positions Arg-158–Glu-387 constitute a Radical SAM core domain. Positions Gln-390 to Pro-453 constitute a TRAM domain.

This sequence belongs to the methylthiotransferase family. MiaB subfamily. As to quaternary structure, monomer. It depends on [4Fe-4S] cluster as a cofactor.

Its subcellular location is the cytoplasm. The catalysed reaction is N(6)-dimethylallyladenosine(37) in tRNA + (sulfur carrier)-SH + AH2 + 2 S-adenosyl-L-methionine = 2-methylsulfanyl-N(6)-dimethylallyladenosine(37) in tRNA + (sulfur carrier)-H + 5'-deoxyadenosine + L-methionine + A + S-adenosyl-L-homocysteine + 2 H(+). Its function is as follows. Catalyzes the methylthiolation of N6-(dimethylallyl)adenosine (i(6)A), leading to the formation of 2-methylthio-N6-(dimethylallyl)adenosine (ms(2)i(6)A) at position 37 in tRNAs that read codons beginning with uridine. The chain is tRNA-2-methylthio-N(6)-dimethylallyladenosine synthase from Desulforamulus reducens (strain ATCC BAA-1160 / DSM 100696 / MI-1) (Desulfotomaculum reducens).